Consider the following 310-residue polypeptide: Coproporphyrin III ferrochelatase (310 aa).

Residues Tyr13, Arg30, 46 to 47 (RY), Ser54, and Tyr125 contribute to the Fe-coproporphyrin III site. The Fe(2+) site is built by His181 and Glu262.

The protein belongs to the ferrochelatase family.

It localises to the cytoplasm. It catalyses the reaction Fe-coproporphyrin III + 2 H(+) = coproporphyrin III + Fe(2+). It participates in porphyrin-containing compound metabolism; protoheme biosynthesis. In terms of biological role, involved in coproporphyrin-dependent heme b biosynthesis. Catalyzes the insertion of ferrous iron into coproporphyrin III to form Fe-coproporphyrin III. This Halalkalibacterium halodurans (strain ATCC BAA-125 / DSM 18197 / FERM 7344 / JCM 9153 / C-125) (Bacillus halodurans) protein is Coproporphyrin III ferrochelatase.